A 551-amino-acid chain; its full sequence is Formate--tetrahydrofolate ligase (551 aa).

65–72 (TPAGEGKT) contacts ATP.

The protein belongs to the formate--tetrahydrofolate ligase family.

The enzyme catalyses (6S)-5,6,7,8-tetrahydrofolate + formate + ATP = (6R)-10-formyltetrahydrofolate + ADP + phosphate. It participates in one-carbon metabolism; tetrahydrofolate interconversion. This is Formate--tetrahydrofolate ligase from Thermosipho melanesiensis (strain DSM 12029 / CIP 104789 / BI429).